The chain runs to 251 residues: Transmembrane ascorbate-dependent reductase CYB561 (251 aa).

Residue M1 is modified to N-acetylmethionine. At 1 to 16 (MEGGAAAATPTALPYY) the chain is on the cytoplasmic side. The helical transmembrane segment at 17–37 (VAFSQLLGLTLVAMTGAWLGL) threads the bilayer. Positions 19 to 220 (FSQLLGLTLV…FGGAVLYILT (202 aa)) constitute a Cytochrome b561 domain. At 38–51 (YRGGIAWESDLQFN) the chain is on the vesicular side. Residues 52 to 72 (AHPLCMVIGLIFLQGNALLVY) form a helical membrane-spanning segment. Heme b contacts are provided by H53, R73, and K80. At 73–85 (RVFRNEAKRTTKV) the chain is on the cytoplasmic side. The L-ascorbate site is built by K80 and K84. A helical transmembrane segment spans residues 86 to 106 (LHGLLHIFALVIALVGLVAVF). Residues H87, 116–119 (DLYS), and H121 contribute to the heme b site. Topologically, residues 107 to 124 (DYHRKKGYADLYSLHSWC) are vesicular. A helical transmembrane segment spans residues 125–145 (GILVFVLYFVQWLVGFSFFLF). At 146 to 158 (PGASFSLRSRYRP) the chain is on the cytoplasmic side. Residue R153 participates in L-ascorbate binding. Residues 159 to 179 (QHIFFGATIFLLSVGTALLGL) traverse the membrane as a helical segment. Positions 160 and 181 each coordinate heme b. The Vesicular segment spans residues 180–198 (KEALLFNLGGKYSAFEPEG). A helical membrane pass occupies residues 199 to 219 (VLANVLGLLLACFGGAVLYIL). Topologically, residues 220-251 (TRADWKRPSQAEEQALSMDFKTLTEGDSPGSQ) are cytoplasmic. K225 provides a ligand contact to heme b. S247 is modified (phosphoserine).

It depends on heme b as a cofactor. As to expression, expressed in many tissues, in particular the brain especially in the cortex and hippocampus.

It localises to the cytoplasmic vesicle. The protein resides in the secretory vesicle. The protein localises to the chromaffin granule membrane. The enzyme catalyses monodehydro-L-ascorbate radical(out) + L-ascorbate(in) = monodehydro-L-ascorbate radical(in) + L-ascorbate(out). Functionally, transmembrane reductase that uses ascorbate as an electron donor in the cytoplasm and transfers electrons across membranes to reduce monodehydro-L-ascorbate radical in the lumen of secretory vesicles. It is therefore involved the regeneration and homeostasis within secretory vesicles of ascorbate which in turn provides reducing equivalents needed to support the activity of intravesicular enzymes. This is Transmembrane ascorbate-dependent reductase CYB561 from Homo sapiens (Human).